The chain runs to 178 residues: Large ribosomal subunit protein bL25 (178 aa).

This sequence belongs to the bacterial ribosomal protein bL25 family. CTC subfamily. As to quaternary structure, part of the 50S ribosomal subunit; part of the 5S rRNA/L5/L18/L25 subcomplex. Contacts the 5S rRNA. Binds to the 5S rRNA independently of L5 and L18.

Functionally, this is one of the proteins that binds to the 5S RNA in the ribosome where it forms part of the central protuberance. This Wolinella succinogenes (strain ATCC 29543 / DSM 1740 / CCUG 13145 / JCM 31913 / LMG 7466 / NCTC 11488 / FDC 602W) (Vibrio succinogenes) protein is Large ribosomal subunit protein bL25.